The sequence spans 141 residues: Large ribosomal subunit protein uL11 (141 aa).

Belongs to the universal ribosomal protein uL11 family. As to quaternary structure, part of the ribosomal stalk of the 50S ribosomal subunit. Interacts with L10 and the large rRNA to form the base of the stalk. L10 forms an elongated spine to which L12 dimers bind in a sequential fashion forming a multimeric L10(L12)X complex. Post-translationally, one or more lysine residues are methylated.

Its function is as follows. Forms part of the ribosomal stalk which helps the ribosome interact with GTP-bound translation factors. The protein is Large ribosomal subunit protein uL11 of Campylobacter fetus subsp. fetus (strain 82-40).